The chain runs to 377 residues: tRNA-specific 2-thiouridylase MnmA (377 aa).

ATP-binding positions include 18–25 (GMSGGVDS) and Met44. The segment at 104–106 (NPD) is interaction with target base in tRNA. Cys109 (nucleophile) is an active-site residue. A disulfide bridge connects residues Cys109 and Cys209. Gly134 serves as a coordination point for ATP. Residues 159-161 (KDQ) are interaction with tRNA. Cys209 functions as the Cysteine persulfide intermediate in the catalytic mechanism. Residues 324–325 (RY) form an interaction with tRNA region.

The protein belongs to the MnmA/TRMU family.

It localises to the cytoplasm. The catalysed reaction is S-sulfanyl-L-cysteinyl-[protein] + uridine(34) in tRNA + AH2 + ATP = 2-thiouridine(34) in tRNA + L-cysteinyl-[protein] + A + AMP + diphosphate + H(+). Catalyzes the 2-thiolation of uridine at the wobble position (U34) of tRNA, leading to the formation of s(2)U34. This is tRNA-specific 2-thiouridylase MnmA from Photobacterium profundum (strain SS9).